A 305-amino-acid chain; its full sequence is MIKQRTLKRIVQTTGVGLHTGKKVTLTLRPASANTGVIYRRTDLNPPVDFPADAKSVRDTMLCTCLVNEHDVRISTVEHLNAALAGLGIDNIVVEVNAPEIPIMDGSAAPFIYLLMDAGIEELNSAKKFVRIKQPVRVEDGDKWAELSPHNGFSLDFTIDFNHPAIDASTQRYRMDFSAEAFARQISRARTFGFMRDIEALQSRGLALGGSFDCAIVVDDYRVLNEDGLRFEDEFVRHKMLDAIGDLYMCGNNIIGAFTAYKSGHALNNKLLQAVLAKQEAWEWATFEDEATLPVTFRAPNLVLA.

The Zn(2+) site is built by His79, His238, and Asp242. His265 functions as the Proton donor in the catalytic mechanism.

This sequence belongs to the LpxC family. Zn(2+) serves as cofactor.

The catalysed reaction is a UDP-3-O-[(3R)-3-hydroxyacyl]-N-acetyl-alpha-D-glucosamine + H2O = a UDP-3-O-[(3R)-3-hydroxyacyl]-alpha-D-glucosamine + acetate. Its pathway is glycolipid biosynthesis; lipid IV(A) biosynthesis; lipid IV(A) from (3R)-3-hydroxytetradecanoyl-[acyl-carrier-protein] and UDP-N-acetyl-alpha-D-glucosamine: step 2/6. Catalyzes the hydrolysis of UDP-3-O-myristoyl-N-acetylglucosamine to form UDP-3-O-myristoylglucosamine and acetate, the committed step in lipid A biosynthesis. This is UDP-3-O-acyl-N-acetylglucosamine deacetylase from Erwinia tasmaniensis (strain DSM 17950 / CFBP 7177 / CIP 109463 / NCPPB 4357 / Et1/99).